Here is a 399-residue protein sequence, read N- to C-terminus: MDTHAFKRSLHHSERYNRRGFGRAEEVAESLEQAYQSGLIGTIRDNGYRLEHGRLNVRLAEAFGFCWGVERAVAMAYETRKHYPSERLWITNEIIHNPSVNDHLREMDVQFIPVEQGVKDFSGVTSGDVVILPAFGATVQEMQLLNERGCHIVDTTCPWVSKVWNTVEKHKKHTFTSIIHGKVKHEETLATSSFAGTYLVVLDLEEAQYVADYILGNGDREDFIKRFAKACSPGFDPDRDLERLGVANQTTMLKSETEEIGRLFERTMLSKYGPTQLNDHFLAFNTICDATQERQDAMFSLVDEPLDLMVVIGGFNSSNTTHLQEIAVSRGIRSFHIDTPERIDVGSNSIEHKPLAADLCREGDFLPEGPVRVGITSGASTPDRAVEEVIEKLMQLSEN.

Position 66 (Cys-66) interacts with [4Fe-4S] cluster. His-96 provides a ligand contact to (2E)-4-hydroxy-3-methylbut-2-enyl diphosphate. His-96 is a binding site for dimethylallyl diphosphate. An isopentenyl diphosphate-binding site is contributed by His-96. [4Fe-4S] cluster is bound at residue Cys-157. His-185 contributes to the (2E)-4-hydroxy-3-methylbut-2-enyl diphosphate binding site. His-185 provides a ligand contact to dimethylallyl diphosphate. Residue His-185 participates in isopentenyl diphosphate binding. Residue Glu-187 is the Proton donor of the active site. Thr-250 provides a ligand contact to (2E)-4-hydroxy-3-methylbut-2-enyl diphosphate. Cys-288 is a binding site for [4Fe-4S] cluster. The (2E)-4-hydroxy-3-methylbut-2-enyl diphosphate site is built by Ser-317, Ser-318, Asn-319, and Ser-380. Residues Ser-317, Ser-318, Asn-319, and Ser-380 each contribute to the dimethylallyl diphosphate site. Ser-317, Ser-318, Asn-319, and Ser-380 together coordinate isopentenyl diphosphate.

This sequence belongs to the IspH family. Requires [4Fe-4S] cluster as cofactor.

The enzyme catalyses isopentenyl diphosphate + 2 oxidized [2Fe-2S]-[ferredoxin] + H2O = (2E)-4-hydroxy-3-methylbut-2-enyl diphosphate + 2 reduced [2Fe-2S]-[ferredoxin] + 2 H(+). It catalyses the reaction dimethylallyl diphosphate + 2 oxidized [2Fe-2S]-[ferredoxin] + H2O = (2E)-4-hydroxy-3-methylbut-2-enyl diphosphate + 2 reduced [2Fe-2S]-[ferredoxin] + 2 H(+). Its pathway is isoprenoid biosynthesis; dimethylallyl diphosphate biosynthesis; dimethylallyl diphosphate from (2E)-4-hydroxy-3-methylbutenyl diphosphate: step 1/1. It functions in the pathway isoprenoid biosynthesis; isopentenyl diphosphate biosynthesis via DXP pathway; isopentenyl diphosphate from 1-deoxy-D-xylulose 5-phosphate: step 6/6. In terms of biological role, catalyzes the conversion of 1-hydroxy-2-methyl-2-(E)-butenyl 4-diphosphate (HMBPP) into a mixture of isopentenyl diphosphate (IPP) and dimethylallyl diphosphate (DMAPP). Acts in the terminal step of the DOXP/MEP pathway for isoprenoid precursor biosynthesis. This chain is 4-hydroxy-3-methylbut-2-enyl diphosphate reductase, found in Synechococcus sp. (strain CC9605).